A 252-amino-acid polypeptide reads, in one-letter code: MSIKIPFLSKQVKETELEDWDNIPSHIAIIMDGNGRWAQKRGLPRIAGHREGVSTVNRIVKTAVNANVKVLTLYTFSTENWKRPKSEVDFILKLPKEFLHVYLPGLIENNVRVQTIGDFNAVPKHTQDAIEYAMEKTKDNDGLVLNFALNYGSRYEIIHAVKQIVQKTKASELDVEQLDESYFEKHLFTNGLSDPDLLIRTGGEYRLSNFMLWQLAYTEFWFTEKLWPEFDEDTFHQALMEYQQRKRRYGGI.

Asp32 is a catalytic residue. Residue Asp32 coordinates Mg(2+). Substrate is bound by residues 33–36 (GNGR), Trp37, Arg45, His49, and 77–79 (STE). Asn80 serves as the catalytic Proton acceptor. Substrate-binding positions include Trp81, Arg83, Arg200, and 206 to 208 (RLS). Glu219 is a binding site for Mg(2+).

Belongs to the UPP synthase family. As to quaternary structure, homodimer. Mg(2+) is required as a cofactor.

In terms of biological role, catalyzes the condensation of isopentenyl diphosphate (IPP) with allylic pyrophosphates generating different type of terpenoids. In Oceanobacillus iheyensis (strain DSM 14371 / CIP 107618 / JCM 11309 / KCTC 3954 / HTE831), this protein is Isoprenyl transferase.